The chain runs to 637 residues: Biosynthetic arginine decarboxylase (637 aa).

Lysine 101 bears the N6-(pyridoxal phosphate)lysine mark. Residue 286–296 (FDVGGGLAVDY) participates in substrate binding.

It belongs to the Orn/Lys/Arg decarboxylase class-II family. SpeA subfamily. Requires Mg(2+) as cofactor. Pyridoxal 5'-phosphate serves as cofactor.

The enzyme catalyses L-arginine + H(+) = agmatine + CO2. The protein operates within amine and polyamine biosynthesis; agmatine biosynthesis; agmatine from L-arginine: step 1/1. In terms of biological role, catalyzes the biosynthesis of agmatine from arginine. In Shewanella baltica (strain OS195), this protein is Biosynthetic arginine decarboxylase.